Reading from the N-terminus, the 559-residue chain is MTAQHSDITATSAWQKLHAHRDETSALTIRELFAADTERGRELTLTAGELYIDYSKQRVSRHTLALLVELARAAGVEERRDAMFRGERINTSEDRAVLHTALRLPAHASLRVDGHDVVADVHRVLARMGVFSDRLRSGEWRGATGRPIMTVVNIGIGGSDLGPHMVYRALRHYADSGISVRFISNVDPSDLVATLADLDPSTTLFIVASKTFSTLETLTNAANARRWVTSALGEQAVARHFVAVSTNAERVAAFGIDTENMFGFWDWVGGRYSVGSAVGLAVMVAIGKDSFEEFLDGFHTIDRHFADTPLEDNAPAILALLGVWYSNFFGAETRAILPYSNDLGRFPAYLQQLAMESNGKSVRADGSPIGTTTGAVFWGEPGSNGQHAFYQLLHQGTRLVPADFIGFAEPTHDLPAADGAGSMHNILMSNLFAQSRVLAFGKTPEELTREDTAPDLIAHKTMPGNQPSTTILAPRLTPSVLGQLIALYEHQVFVEGIIYGIGSFDQWGVELGKTQALELEPALSSGNGSLPSDLDSSTASMIRWYHGVRAHGTATVGRP.

The active-site Proton donor is the Glu-356. Residues His-387 and Lys-513 contribute to the active site.

It belongs to the GPI family.

It is found in the cytoplasm. It catalyses the reaction alpha-D-glucose 6-phosphate = beta-D-fructose 6-phosphate. It participates in carbohydrate biosynthesis; gluconeogenesis. It functions in the pathway carbohydrate degradation; glycolysis; D-glyceraldehyde 3-phosphate and glycerone phosphate from D-glucose: step 2/4. In terms of biological role, catalyzes the reversible isomerization of glucose-6-phosphate to fructose-6-phosphate. The protein is Glucose-6-phosphate isomerase 4 of Rhodococcus jostii (strain RHA1).